The sequence spans 300 residues: GTPase Era (300 aa).

Residues 5 to 176 enclose the Era-type G domain; that stretch reads HSGFVCLVGR…IDVLAAALPA (172 aa). The G1 stretch occupies residues 13–20; that stretch reads GRPNTGKS. 13 to 20 is a GTP binding site; that stretch reads GRPNTGKS. Residues 39-43 are G2; that stretch reads QTTRH. Residues 60–63 are G3; sequence DTPG. GTP contacts are provided by residues 60–64 and 125–128; these read DTPGL and TKID. Residues 125 to 128 form a G4 region; sequence TKID. The segment at 155–157 is G5; that stretch reads VSA. In terms of domain architecture, KH type-2 spans 207-286; sequence VRDELPHSLA…YLDLRVKVAK (80 aa).

This sequence belongs to the TRAFAC class TrmE-Era-EngA-EngB-Septin-like GTPase superfamily. Era GTPase family. In terms of assembly, monomer.

It is found in the cell envelope. The protein localises to the secreted. The protein resides in the cell wall. Its function is as follows. Exhibits GTPase activity. Binds RNA but is probably not involved in ribosome assembly in mycobacteria. In Mycobacterium bovis (strain ATCC BAA-935 / AF2122/97), this protein is GTPase Era.